Consider the following 327-residue polypeptide: Thiamine-monophosphate kinase (327 aa).

Residues D30, S45, S46, and D47 each coordinate Mg(2+). Substrate is bound at residue H54. D76 lines the Mg(2+) pocket. Residues Y106, 123–124 (GD), and R149 contribute to the ATP site. D124 is a binding site for Mg(2+). D221 provides a ligand contact to Mg(2+). An ATP-binding site is contributed by S223. D224 is a binding site for Mg(2+). Substrate-binding residues include E268 and F321.

It belongs to the thiamine-monophosphate kinase family.

It carries out the reaction thiamine phosphate + ATP = thiamine diphosphate + ADP. It participates in cofactor biosynthesis; thiamine diphosphate biosynthesis; thiamine diphosphate from thiamine phosphate: step 1/1. Catalyzes the ATP-dependent phosphorylation of thiamine-monophosphate (TMP) to form thiamine-pyrophosphate (TPP), the active form of vitamin B1. In Synechococcus elongatus (strain ATCC 33912 / PCC 7942 / FACHB-805) (Anacystis nidulans R2), this protein is Thiamine-monophosphate kinase.